The chain runs to 125 residues: Large ribosomal subunit protein bL12 (125 aa).

It belongs to the bacterial ribosomal protein bL12 family. In terms of assembly, homodimer. Part of the ribosomal stalk of the 50S ribosomal subunit. Forms a multimeric L10(L12)X complex, where L10 forms an elongated spine to which 2 to 4 L12 dimers bind in a sequential fashion. Binds GTP-bound translation factors.

Functionally, forms part of the ribosomal stalk which helps the ribosome interact with GTP-bound translation factors. Is thus essential for accurate translation. The sequence is that of Large ribosomal subunit protein bL12 from Polaromonas naphthalenivorans (strain CJ2).